Reading from the N-terminus, the 476-residue chain is Calcitonin gene-related peptide type 1 receptor (476 aa).

Residues 1–33 form the signal peptide; the sequence is METLQMGLLSRSALFKYIIIFLIMINTRGYVLA. Over 34-154 the chain is Extracellular; it reads SQEQEAKTSV…FTHEKVKTAL (121 aa). 3 disulfides stabilise this stretch: Cys63–Cys89, Cys80–Cys120, and Cys103–Cys142. N-linked (GlcNAc...) asparagine glycosylation is found at Asn81, Asn133, and Asn138. Residues 155–179 form a helical membrane-spanning segment; that stretch reads NLYYLTIIGHGLSIASLLISLGIFF. The Cytoplasmic segment spans residues 180–190; that stretch reads YFKNLSCQRIT. The helical transmembrane segment at 191–213 threads the bilayer; that stretch reads LHKNLFFSFVCNSIITIISLSAV. Residues 214 to 224 lie on the Extracellular side of the membrane; that stretch reads ANNQALVATNP. A helical transmembrane segment spans residues 225 to 253; sequence VICKISQFIHLYLMGCNYFWMLCEGIYLH. Topologically, residues 254–267 are cytoplasmic; the sequence is TLIVVAVFAEKQHL. Residues 268-288 form a helical membrane-spanning segment; the sequence is MWYYLLGWGFPLIPACIHAVA. Residues 289–304 are Extracellular-facing; it reads RSLYYNDNCWISSETH. The chain crosses the membrane as a helical span at residues 305 to 329; sequence LLYIIHGPICAALLVNLFFLLNIVR. Topologically, residues 330-344 are cytoplasmic; sequence VLITKLKVTHQAESN. Residues 345–366 form a helical membrane-spanning segment; it reads LYMKAVRATLILVPLLGIEFVL. Topologically, residues 367–381 are extracellular; the sequence is FPWKPEGRIAEEIYD. A helical membrane pass occupies residues 382-402; it reads YVMHILMHYQGLLVATIFCFF. The Cytoplasmic segment spans residues 403–476; the sequence is NGEVQAVLKR…VFFKTEKQYM (74 aa).

The protein belongs to the G-protein coupled receptor 2 family.

Its subcellular location is the cell membrane. In terms of biological role, may function as G protein-coupled receptor for calcitonin-gene-related peptides and adrenomedullin. Specificity may be modulated by accessory proteins. May activate cAMP-dependent pathway. The polypeptide is Calcitonin gene-related peptide type 1 receptor (calcrl) (Xenopus laevis (African clawed frog)).